The sequence spans 492 residues: Peptidyl-prolyl cis-trans isomerase-like 4 (492 aa).

Positions 1 to 161 constitute a PPIase cyclophilin-type domain; that stretch reads MAVLLETTLG…QDIRINHTVI (161 aa). Residues 167–188 are disordered; it reads DDPPDLLIPDRSPEPTKEQLDS. The segment covering 177–187 has biased composition (basic and acidic residues); that stretch reads RSPEPTKEQLD. The residue at position 178 (S178) is a Phosphoserine. At T182 the chain carries Phosphothreonine. Residues K201, K212, and K218 each participate in a glycyl lysine isopeptide (Lys-Gly) (interchain with G-Cter in SUMO2) cross-link. The RRM domain occupies 240-318; that stretch reads NVLFVCKLNP…RRIHVDFSQS (79 aa). Glycyl lysine isopeptide (Lys-Gly) (interchain with G-Cter in SUMO2) cross-links involve residues K321 and K362. 2 disordered regions span residues 368-409 and 423-492; these read DEQG…NPNQ and EESC…SKYR. Residues 377 to 390 show a composition bias toward basic residues; that stretch reads SHSHTSKKHKKKTR. S393 is modified (phosphoserine). Residue K405 forms a Glycyl lysine isopeptide (Lys-Gly) (interchain with G-Cter in SUMO2) linkage. Over residues 426 to 436 the composition is skewed to basic and acidic residues; the sequence is CWEKQKNEKRD. K460 participates in a covalent cross-link: Glycyl lysine isopeptide (Lys-Gly) (interchain with G-Cter in SUMO2). Position 471 is a phosphoserine (S471). A compositionally biased stretch (basic residues) spans 473-485; the sequence is KRDRSRSPKKSKA.

It belongs to the cyclophilin-type PPIase family. PPIL4 subfamily.

Its subcellular location is the nucleus. The catalysed reaction is [protein]-peptidylproline (omega=180) = [protein]-peptidylproline (omega=0). Functionally, PPIases accelerate the folding of proteins. It catalyzes the cis-trans isomerization of proline imidic peptide bonds in oligopeptides. The sequence is that of Peptidyl-prolyl cis-trans isomerase-like 4 (Ppil4) from Mus musculus (Mouse).